Consider the following 68-residue polypeptide: Large ribosomal subunit protein uL29 (68 aa).

The protein belongs to the universal ribosomal protein uL29 family.

In Parvibaculum lavamentivorans (strain DS-1 / DSM 13023 / NCIMB 13966), this protein is Large ribosomal subunit protein uL29.